Consider the following 299-residue polypeptide: GTPase Era (299 aa).

The 171-residue stretch at 5–175 (RSGFVCLVGR…IDVLAAALPP (171 aa)) folds into the Era-type G domain. A G1 region spans residues 13 to 20 (GRPNTGKS). 13 to 20 (GRPNTGKS) is a binding site for GTP. Residues 39-43 (QTTRH) form a G2 region. A G3 region spans residues 60-63 (DTPG). Residues 60-64 (DTPGL) and 124-127 (TKID) each bind GTP. The tract at residues 124 to 127 (TKID) is G4. The interval 154–156 (VSA) is G5. Residues 206-285 (VRDELPHSLA…YLDLRVKVAK (80 aa)) enclose the KH type-2 domain.

This sequence belongs to the TRAFAC class TrmE-Era-EngA-EngB-Septin-like GTPase superfamily. Era GTPase family. Monomer.

It is found in the cell envelope. The protein resides in the secreted. The protein localises to the cell wall. Its function is as follows. Exhibits GTPase activity. Binds RNA but is probably not involved in ribosome assembly in mycobacteria. The sequence is that of GTPase Era from Mycobacterium avium (strain 104).